A 261-amino-acid polypeptide reads, in one-letter code: Ubiquinone biosynthesis O-methyltransferase (261 aa).

The segment at 1–22 (MTMQVDPSANSSAASSAAPGTT) is disordered. Over residues 8-18 (SANSSAASSAA) the composition is skewed to low complexity. Residues arginine 55, glycine 86, aspartate 107, and methionine 149 each contribute to the S-adenosyl-L-methionine site.

It belongs to the methyltransferase superfamily. UbiG/COQ3 family.

The enzyme catalyses a 3-demethylubiquinol + S-adenosyl-L-methionine = a ubiquinol + S-adenosyl-L-homocysteine + H(+). It carries out the reaction a 3-(all-trans-polyprenyl)benzene-1,2-diol + S-adenosyl-L-methionine = a 2-methoxy-6-(all-trans-polyprenyl)phenol + S-adenosyl-L-homocysteine + H(+). The protein operates within cofactor biosynthesis; ubiquinone biosynthesis. Its function is as follows. O-methyltransferase that catalyzes the 2 O-methylation steps in the ubiquinone biosynthetic pathway. The chain is Ubiquinone biosynthesis O-methyltransferase from Nitrobacter winogradskyi (strain ATCC 25391 / DSM 10237 / CIP 104748 / NCIMB 11846 / Nb-255).